The sequence spans 596 residues: Elongation factor 4 (596 aa).

One can recognise a tr-type G domain in the interval 2-184 (KHIRNFSIIA…VIVAQIPSPE (183 aa)). Residues 14 to 19 (DHGKST) and 131 to 134 (NKID) each bind GTP.

It belongs to the TRAFAC class translation factor GTPase superfamily. Classic translation factor GTPase family. LepA subfamily.

It localises to the cell inner membrane. It catalyses the reaction GTP + H2O = GDP + phosphate + H(+). Required for accurate and efficient protein synthesis under certain stress conditions. May act as a fidelity factor of the translation reaction, by catalyzing a one-codon backward translocation of tRNAs on improperly translocated ribosomes. Back-translocation proceeds from a post-translocation (POST) complex to a pre-translocation (PRE) complex, thus giving elongation factor G a second chance to translocate the tRNAs correctly. Binds to ribosomes in a GTP-dependent manner. The sequence is that of Elongation factor 4 from Shewanella sediminis (strain HAW-EB3).